Here is a 245-residue protein sequence, read N- to C-terminus: Phycocyanobilin:ferredoxin oxidoreductase (245 aa).

This sequence belongs to the HY2 family.

It catalyses the reaction (2R,3Z)-phycocyanobilin + 4 oxidized [2Fe-2S]-[ferredoxin] = biliverdin IXalpha + 4 reduced [2Fe-2S]-[ferredoxin] + 4 H(+). Functionally, catalyzes the four-electron reduction of biliverdin IX-alpha (2-electron reduction at both the A and D rings); the reaction proceeds via an isolatable 2-electron intermediate, 181,182-dihydrobiliverdin. The polypeptide is Phycocyanobilin:ferredoxin oxidoreductase (pcyA) (Nostoc punctiforme (strain ATCC 29133 / PCC 73102)).